The following is an 818-amino-acid chain: Sodium/hydrogen exchanger 1 (818 aa).

At 1-98 (MLLWSGICGL…FPVLGIDYTH (98 aa)) the chain is on the extracellular side. Positions 39–76 (PSPTASTIRGSEPPRERSIGDVTTAPPELAPESRPVNH) are disordered. An N-linked (GlcNAc...) asparagine glycan is attached at Asn-75. The helical transmembrane segment at 99–121 (VRTPFEISLWILLACLMKIGFHV) threads the bilayer. Over 122–130 (IPTISSIVP) the chain is Cytoplasmic. The helical transmembrane segment at 131-148 (ESCLLIVVGLLVGGLIKA) threads the bilayer. Residues 149 to 158 (VGETPPFLQS) are Extracellular-facing. Residues 159-176 (EVFFLFLLPPIILDAGYF) form a helical membrane-spanning segment. The Cytoplasmic segment spans residues 177-186 (LPLRQFTENL). The chain crosses the membrane as a helical span at residues 187–215 (GTILIFAVVGTLWNAFFLGGLMYAVCLVG). The Extracellular segment spans residues 216–222 (GEQINNI). The helical transmembrane segment at 223–249 (GLLDNLLFGSIISAVDPVAVLAVFEEI) threads the bilayer. Residues 250–252 (HIN) are Cytoplasmic-facing. The chain crosses the membrane as a helical span at residues 253–283 (ELLHILVFGESLLNDAVTVVLYHLFEEFANY). At 284 to 287 (DRVG) the chain is on the extracellular side. A helical membrane pass occupies residues 288–322 (IVDIVLGFLSFFVVSLGGVFVGVVYGVIAAFTSRF). Residues 323–328 (TSHIRV) are Cytoplasmic-facing. A helical transmembrane segment spans residues 329–341 (IEPLFVFLYSYMA). Residues 342-350 (YLSAELFHL) are Extracellular-facing. A helical transmembrane segment spans residues 351–371 (SGIMALIASGVVMRPYVEANI). The Cytoplasmic segment spans residues 372 to 373 (SH). The chain crosses the membrane as a helical span at residues 374–404 (KSHTTIKYFLKMWSSVSETLIFIFLGVSTVA). Residues 405–410 (GSHHWN) lie on the Extracellular side of the membrane. The helical transmembrane segment at 411-438 (WTFVISTLLFCLIARVLGVLGLTWFINK) threads the bilayer. At 439–444 (FRIVKL) the chain is on the cytoplasmic side. Residues 445 to 469 (TPKDQFIIAYGGLRGAIAFSLGHLL) form a helical membrane-spanning segment. At 470 to 475 (DKNHFP) the chain is on the extracellular side. A helical transmembrane segment spans residues 476-505 (MCDLFLTAIITVIFFTVFVQGMTIRPLVDL). The interval 503–545 (VDLLAVKKKQETKRSINEEIHTQFLDHLLTGIEDICGHYGHHH) is interaction with TESC. The Cytoplasmic portion of the chain corresponds to 506–818 (LAVKKKQETK…EGEPFIPKGQ (313 aa)). The segment at 509–516 (KKKQETKR) is PI(4,5)P2-binding region. The segment at 515 to 545 (KRSINEEIHTQFLDHLLTGIEDICGHYGHHH) is interaction with CHP2. The interval 540–545 (HYGHHH) is confers pH-dependent PI(4,5)P2 binding. The tract at residues 552 to 560 (RFNKKYVKK) is PI(4,5)P2-binding region. Phosphoserine occurs at positions 599 and 602. Thr-603 carries the post-translational modification Phosphothreonine. Phosphoserine occurs at positions 605 and 648. The segment at 633–818 (KILRNNLQKT…EGEPFIPKGQ (186 aa)) is interaction with TESC. The segment at 633 to 818 (KILRNNLQKT…EGEPFIPKGQ (186 aa)) is interaction with CALM1. The tract at residues 684-687 (LTVP) is interaction with PPP3CA. Residues Ser-693, Ser-697, and Ser-703 each carry the phosphoserine modification. Positions 715–720 (PVITID) are interaction with PPP3CA. A phosphoserine mark is found at Ser-723, Ser-726, and Ser-729. Residues 739–818 (GKVLGLSREP…EGEPFIPKGQ (80 aa)) are disordered. A phosphothreonine mark is found at Thr-752 and Thr-782. Residues 785-794 (PSDSPSSQRI) show a composition bias toward polar residues. Phosphoserine occurs at positions 788, 790, and 799.

Belongs to the monovalent cation:proton antiporter 1 (CPA1) transporter (TC 2.A.36) family. Homodimer; dimerization is crucial for its function. Oligomer. Interacts with CALM in a calcium-dependent manner. Interacts with TESC. Interacts (via the juxtamembrane region of the cytoplasmic C-terminal domain) with CHP1; the interaction occurs at the plasma membrane in a calcium-dependent manner. Interacts with CHP2; the interaction occurs in a calcium-dependent manner. Interacts with EZR; regulates the cytoskeletal interactions of SLC9A1 and promotes stress fiber formation. In terms of processing, ubiquitinated, leading to its degradation by the proteasome. Ubiquitination is reduced by CHP1. O-glycosylated. Post-translationally, palmitoylated; may play a major role in SLC9A1 regulation. In terms of processing, phosphorylation at Thr-782 increases SLC9A1 activity. Specifically dephosphorylated at Thr-782 by PPP3CA that negatively regulates SLC9A1 activity. Phosphorylation at Ser-648 by AKT1 reduces SLC9A1 binding to CALM1.

It is found in the cell membrane. It localises to the basolateral cell membrane. It catalyses the reaction Na(+)(in) + H(+)(out) = Na(+)(out) + H(+)(in). The enzyme catalyses Li(+)(out) + H(+)(in) = Li(+)(in) + H(+)(out). The catalysed reaction is Li(+)(in) + Na(+)(out) = Li(+)(out) + Na(+)(in). Activated at acidic pHs. Inhibited by cariporide and eniporide. Inhibited by amiloride and 5-amino-substituted derivatives. Phosphatidylinositol 4,5-bisphosphate (PI(4,5)P2) and phosphatidylinositol 3,4,5-trisphosphate (PI(3,4,5)P3) bind and differentially regulate SLC9A1 activity. Its function is as follows. Electroneutral Na(+) /H(+) antiporter that extrudes Na(+) in exchange for external protons driven by the inward sodium ion chemical gradient, protecting cells from acidification that occurs from metabolism. Exchanges intracellular H(+) ions for extracellular Na(+) in 1:1 stoichiometry. Plays a key role in maintening intracellular pH neutral and cell volume, and thus is important for cell growth, proliferation, migration and survival. In addition, can transport lithium Li(+) and also functions as a Na(+)/Li(+) antiporter. SLC9A1 also functions in membrane anchoring and organization of scaffolding complexes that coordinate signaling inputs. This is Sodium/hydrogen exchanger 1 (SLC9A1) from Sus scrofa (Pig).